The following is a 46-amino-acid chain: Defensin-1 (46 aa).

Cystine bridges form between Cys3-Cys46, Cys14-Cys35, Cys20-Cys40, and Cys24-Cys42.

The protein belongs to the DEFL family. Epidermis and vascular bundles of pods, stems, roots, leaves and wet or dry seeds.

Its function is as follows. Possesses antifungal activity sensitive to inorganic cations. This is Defensin-1 from Pisum sativum (Garden pea).